A 628-amino-acid chain; its full sequence is Patulin synthase (628 aa).

A signal peptide spans 1 to 19 (MRLTSGIFHAAIAVAAVGA). N-linked (GlcNAc...) asparagine glycosylation occurs at N49. FAD is bound by residues 61–62 (TA) and 82–83 (EA). N-linked (GlcNAc...) asparagine glycosylation occurs at N93. 148 to 151 (NYMA) serves as a coordination point for FAD. N-linked (GlcNAc...) asparagine glycosylation is found at N198, N261, N283, N429, N486, and N526. The Proton acceptor role is filled by H564. N575 carries an N-linked (GlcNAc...) asparagine glycan. FAD contacts are provided by residues A598 and 609–610 (PQ).

This sequence belongs to the GMC oxidoreductase family. Requires FAD as cofactor.

The protein resides in the cytoplasm. It localises to the cell cortex. The protein localises to the vacuole. Its subcellular location is the secreted. It is found in the cell wall. The enzyme catalyses (E)-ascladiol + A = patulin + AH2. The protein operates within mycotoxin biosynthesis; patulin biosynthesis. In terms of biological role, patulin synthase; part of the gene cluster that mediates the biosynthesis of patulin, an acetate-derived tetraketide mycotoxin produced by several fungal species that shows antimicrobial properties against several bacteria. PatE catalyzes the last step of the pathway which is the conversion of E-ascladiol to patulin. The pathway begins with the synthesis of 6-methylsalicylic acid by the polyketide synthase (PKS) patK via condensation of acetate and malonate units. The 6-methylsalicylic acid decarboxylase patG then catalyzes the decarboxylation of 6-methylsalicylic acid to yield m-cresol (also known as 3-methylphenol). These first reactions occur in the cytosol. The intermediate m-cresol is then transported into the endoplasmic reticulum where the cytochrome P450 monooxygenase patH converts it to m-hydroxybenzyl alcohol, which is further converted to gentisyl alcohol by the cytochrome P450 monooxygenase patI. The oxidoreductases patJ and patO further convert gentisyl alcohol to isoepoxydon in the vacuole. PatN catalyzes then the transformation of isoepoxydon into phyllostine. The cluster protein patF is responsible for the conversion from phyllostine to neopatulin whereas the alcohol dehydrogenase patD converts neopatulin to E-ascladiol. The steps between isoepoxydon and E-ascladiol occur in the cytosol, and E-ascladiol is probably secreted to the extracellular space by one of the cluster-specific transporters patC or patM. Finally, the secreted patulin synthase patE catalyzes the conversion of E-ascladiol to patulin. In Penicillium expansum (Blue mold rot fungus), this protein is Patulin synthase.